The chain runs to 74 residues: MKSDIHPDYHFIKVVMTDGSEYTTRSTYGKEGDTLQLDIDPRTHPAWTGGTQQLMDRGGRVSRFKSKFGALLKG.

The protein belongs to the bacterial ribosomal protein bL31 family. Type A subfamily. In terms of assembly, part of the 50S ribosomal subunit.

In terms of biological role, binds the 23S rRNA. In Xanthobacter autotrophicus (strain ATCC BAA-1158 / Py2), this protein is Large ribosomal subunit protein bL31.